The primary structure comprises 604 residues: MEGQLLRGLAAQQDCSIREKIDLEIRMREGIWKLLSLSTKKDQVLHAVKNLMVCSARIQAYTAELQKSKEEIANQTGARLVLDSSSENKEGESCRGKIALSDIRIPLMWKDSDHFSNKECTQRFAIFCLFRMGAQVFDTDMVIVDQTVTDICFENVTIFNEAGPDFQIKIEVYSCSAEESSLTNTPRKLAKKLKTSISKATGRKISAALQEESPEACLLAGSVAGAKYHLLAHTTLTLENAGDCFKTHNLSVHGDEECSFWLPLYGNVCCRLVAQPACMAADAFAGFLNEQQTGKGLVGWRRLYCALRGGKLRCFYGPEEIEAKVEPALVVPIDKETRIQAVEKDSKKMHCFSVLSTAAGRAVSHIFAADSLADFQEWMGAFRQHFFDLSQWKHCCEELMRIEIMSPRKPPLFLAKEATSVYYDMSIDSPVKLESVTDIIQKKIGETNRQFLIGRDDQSAAPPWAAVFDGNHEMVIEKKVLSPIGEPAPDGKRKKRRAPLPPTDQPPFCIKTQGRANQSKDSATQAGVSGASSSPSDPRLSPPTHHLQKPVAAPRKLLPARKNSSADIGHTDTKTSLDAKPVPVPRQKSIRDILDPRSWLQAQV.

The REM-1 domain maps to 1–74; it reads MEGQLLRGLA…LQKSKEEIAN (74 aa). Residues 53-79 are a coiled coil; that stretch reads VCSARIQAYTAELQKSKEEIANQTGAR. The PH domain occupies 281–387; it reads ADAFAGFLNE…WMGAFRQHFF (107 aa). Positions 481–590 are disordered; the sequence is LSPIGEPAPD…PVPVPRQKSI (110 aa). Polar residues predominate over residues 514 to 527; it reads GRANQSKDSATQAG. The span at 529–543 shows a compositional bias: low complexity; sequence SGASSSPSDPRLSPP.

Its function is as follows. May play an important role in lymphopoiesis. This chain is Rhotekin-2 (Rtkn2), found in Mus musculus (Mouse).